The primary structure comprises 1215 residues: Endoplasmic reticulum transmembrane helix translocase (1215 aa).

At 1 to 27 the chain is on the cytoplasmic side; that stretch reads MTKKSFVSSPIVRDSTLLVPKSLIAKP. The helical transmembrane segment at 28 to 43 threads the bilayer; it reads YVLPFFPLYATFAQLY. The Lumenal portion of the chain corresponds to 44–56; that stretch reads FQQYDRYIKGPEW. The helical transmembrane segment at 57 to 76 threads the bilayer; that stretch reads TFVYLGTLVSLNILVMLMPA. At 77 to 188 the chain is on the cytoplasmic side; that stretch reads WNVKIKAKFN…ENSFDIPIPT (112 aa). Positions 156–185 are A-domain; part 1; that stretch reads KIGDFQKCKGHSGDLTHLKRLYGENSFDIP. The chain crosses the membrane as a helical span at residues 189 to 216; the sequence is FMELFKEHAVAPLFVFQVFCVALWLLDE. Position 217 (Phe217) is a topological domain, lumenal. A helical membrane pass occupies residues 218 to 246; the sequence is WYYSLFNLFMIISMEAAAVFQRLTALKEF. Residues 247–395 lie on the Cytoplasmic side of the membrane; that stretch reads RTMGIKPYTI…IYSAERVSVD (149 aa). The interval 250 to 390 is A-domain; part 2; sequence GIKPYTINVF…LVRVMIYSAE (141 aa). Residue Ser324 is modified to Phosphoserine. The chain crosses the membrane as a helical span at residues 396-425; that stretch reads NKEALMFILFLLIFAVIASWYVWVEGTKMG. Topologically, residues 426–427 are lumenal; it reads RI. 2 helical membrane-spanning segments follow: residues 428–442 and 446–464; these read QSKL…ITSV and ELPM…ALAK. Residues 465–971 are Cytoplasmic-facing; sequence FYVYCTEPFR…APFTSKLANV (507 aa). Residues 466–495 form a P-domain; part 1 region; it reads YVYCTEPFRIPFAGRIDVCCFDKTGTLTGE. Catalysis depends on Asp487, which acts as the 4-aspartylphosphate intermediate. Positions 487 and 489 each coordinate Mg(2+). Residues 487–489, Phe582, Arg634, Asp699, and 816–820 contribute to the ATP site; these read DKT and DGTND. Residues 497 to 674 are N-domain; it reads LVFEGLAGIS…FNGFLIFHCP (178 aa). The tract at residues 677 to 837 is P-domain; part 2; sequence DDAIETIKML…HVGIALLNGT (161 aa). Residue Asp816 coordinates Mg(2+). The interval 838–953 is arm-like; sequence EEGLKKLGEQ…DAQGDEAPAL (116 aa). A Phosphoserine modification is found at Ser936. Positions 954–969 are P-domain; part 3; the sequence is KLGDASCAAPFTSKLA. Residues 972 to 1011 traverse the membrane as a helical segment; it reads SAVTNIIRQGRCALVNTIQMYKILALNCLISAYSLSIIYM. Topologically, residues 1012-1017 are lumenal; sequence AGVKFG. Residues 1018-1035 traverse the membrane as a helical segment; sequence DGQATVSGLLLSVCFLSI. The Cytoplasmic segment spans residues 1036–1055; that stretch reads SRGKPLEKLSKQRPQSGIFN. The chain crosses the membrane as a helical span at residues 1056–1084; sequence VYIMGSILSQFAVHIATLVYITTEIYKLE. The Lumenal segment spans residues 1085–1099; the sequence is PREPQVDLEKEFAPS. Residues 1100–1121 form a helical membrane-spanning segment; sequence LLNTGIFIIQLVQQVSTFAVNY. Topologically, residues 1122 to 1133 are cytoplasmic; sequence QGEPFRENIRSN. The chain crosses the membrane as a helical span at residues 1134–1151; sequence KGMYYGLLGVTGLALASA. Over 1152-1168 the chain is Lumenal; the sequence is TEFLPELNEAMKFVPMT. Residues 1169–1197 traverse the membrane as a helical segment; the sequence is DDFKIKLTLTLLLDFFGSWGVEHFFKFFF. Topologically, residues 1198–1215 are cytoplasmic; it reads MDDKPSDISVQQVKIASK.

It belongs to the cation transport ATPase (P-type) (TC 3.A.3) family. Type V subfamily. It depends on Mg(2+) as a cofactor.

It is found in the endoplasmic reticulum membrane. The enzyme catalyses [protein]-with a C-terminal TM segment(out) + ATP + H2O = [protein]-with a C-terminal TM segment(in) + ADP + phosphate + H(+). The ATPase activity is stimulated by phosphatidylinositol 4-phosphate (PI4P). Endoplasmic reticulum translocase required to remove mitochondrial transmembrane proteins mistargeted to the endoplasmic reticulum. Acts as a dislocase that mediates the ATP-dependent extraction of mislocalized mitochondrial transmembrane proteins from the endoplasmic reticulum membrane. Specifically binds mitochondrial tail-anchored transmembrane proteins: has an atypically large substrate-binding pocket that recognizes and binds moderately hydrophobic transmembranes with short hydrophilic lumenal domains. The polypeptide is Endoplasmic reticulum transmembrane helix translocase (Saccharomyces cerevisiae (strain ATCC 204508 / S288c) (Baker's yeast)).